The sequence spans 200 residues: Glycerol-3-phosphate acyltransferase (200 aa).

6 helical membrane-spanning segments follow: residues I9–W29, V54–A74, D81–L101, G112–L132, Y140–N160, and Y165–G185.

The protein belongs to the PlsY family. Probably interacts with PlsX.

The protein localises to the cell membrane. The enzyme catalyses an acyl phosphate + sn-glycerol 3-phosphate = a 1-acyl-sn-glycero-3-phosphate + phosphate. Its pathway is lipid metabolism; phospholipid metabolism. In terms of biological role, catalyzes the transfer of an acyl group from acyl-phosphate (acyl-PO(4)) to glycerol-3-phosphate (G3P) to form lysophosphatidic acid (LPA). This enzyme utilizes acyl-phosphate as fatty acyl donor, but not acyl-CoA or acyl-ACP. This is Glycerol-3-phosphate acyltransferase from Desulforamulus reducens (strain ATCC BAA-1160 / DSM 100696 / MI-1) (Desulfotomaculum reducens).